A 321-amino-acid chain; its full sequence is DNA-directed RNA polymerase subunit alpha (321 aa).

The tract at residues methionine 1–proline 235 is alpha N-terminal domain (alpha-NTD). Positions glutamine 252–asparagine 321 are alpha C-terminal domain (alpha-CTD).

It belongs to the RNA polymerase alpha chain family. In terms of assembly, homodimer. In cyanobacteria the RNAP catalytic core is composed of 2 alpha, 1 beta, 1 beta', 1 gamma and 1 omega subunit. When a sigma factor is associated with the core the holoenzyme is formed, which can initiate transcription.

The enzyme catalyses RNA(n) + a ribonucleoside 5'-triphosphate = RNA(n+1) + diphosphate. Functionally, DNA-dependent RNA polymerase catalyzes the transcription of DNA into RNA using the four ribonucleoside triphosphates as substrates. This is DNA-directed RNA polymerase subunit alpha from Thermosynechococcus vestitus (strain NIES-2133 / IAM M-273 / BP-1).